We begin with the raw amino-acid sequence, 263 residues long: Small ribosomal subunit protein uS3 (263 aa).

A KH type-2 domain is found at 39-107; the sequence is VREYLKKKLK…PVHVNIEEIR (69 aa). A disordered region spans residues 211 to 263; sequence GELPPEAATPREEERRPRRAPRGDRPDGARTGRPGGRGRGPRKADAAPAPEGE. The span at 219–240 shows a compositional bias: basic and acidic residues; sequence TPREEERRPRRAPRGDRPDGAR.

Belongs to the universal ribosomal protein uS3 family. Part of the 30S ribosomal subunit. Forms a tight complex with proteins S10 and S14.

In terms of biological role, binds the lower part of the 30S subunit head. Binds mRNA in the 70S ribosome, positioning it for translation. This Bordetella pertussis (strain Tohama I / ATCC BAA-589 / NCTC 13251) protein is Small ribosomal subunit protein uS3.